Reading from the N-terminus, the 424-residue chain is Histidine--tRNA ligase (424 aa).

It belongs to the class-II aminoacyl-tRNA synthetase family. As to quaternary structure, homodimer.

It is found in the cytoplasm. It carries out the reaction tRNA(His) + L-histidine + ATP = L-histidyl-tRNA(His) + AMP + diphosphate + H(+). The chain is Histidine--tRNA ligase from Salmonella paratyphi A (strain ATCC 9150 / SARB42).